The chain runs to 294 residues: Glucosamine kinase GspK (294 aa).

Position 12 (threonine 12) interacts with ATP. Substrate is bound at residue aspartate 101. Threonine 122 serves as a coordination point for ATP. Substrate contacts are provided by residues 139–141 (GRE) and aspartate 146. Glycine 202 contacts ATP.

Belongs to the eukaryotic-type N-acetylglucosamine kinase family.

The protein resides in the cytoplasm. The catalysed reaction is D-glucosamine + ATP = D-glucosamine 6-phosphate + ADP + H(+). Functionally, ATP-dependent kinase, which is specific for glucosamine. Does not show kinase activity with any other sugar. This is Glucosamine kinase GspK (gspK) from Vibrio cholerae serotype O1 (strain ATCC 39315 / El Tor Inaba N16961).